We begin with the raw amino-acid sequence, 367 residues long: D-alanine--D-alanine ligase (367 aa).

Positions 139–340 constitute an ATP-grasp domain; it reads KLILKEKNIP…FSQVIDNMIS (202 aa). 169–224 is a binding site for ATP; sequence KEVLEYPMIVKPARLGSSIGVKKVNDKCELEEAIETAFSFDDKVIVEKWIDSRELN. 3 residues coordinate Mg(2+): D298, E311, and N313.

The protein belongs to the D-alanine--D-alanine ligase family. Requires Mg(2+) as cofactor. Mn(2+) serves as cofactor.

The protein resides in the cytoplasm. The enzyme catalyses 2 D-alanine + ATP = D-alanyl-D-alanine + ADP + phosphate + H(+). Its pathway is cell wall biogenesis; peptidoglycan biosynthesis. Functionally, cell wall formation. The polypeptide is D-alanine--D-alanine ligase (Thermosipho africanus (strain TCF52B)).